The primary structure comprises 116 residues: Peptidyl-tRNA hydrolase (116 aa).

Belongs to the PTH2 family.

The protein localises to the cytoplasm. The enzyme catalyses an N-acyl-L-alpha-aminoacyl-tRNA + H2O = an N-acyl-L-amino acid + a tRNA + H(+). In terms of biological role, the natural substrate for this enzyme may be peptidyl-tRNAs which drop off the ribosome during protein synthesis. The sequence is that of Peptidyl-tRNA hydrolase from Methanopyrus kandleri (strain AV19 / DSM 6324 / JCM 9639 / NBRC 100938).